The sequence spans 1946 residues: Integrin beta-like protein E (1946 aa).

Positions 1–22 are cleaved as a signal peptide; that stretch reads MNNLFKFLFVLLAIFCPPISDL. The Extracellular portion of the chain corresponds to 23 to 1875; it reads VVSHGVPQQH…ATTQTTNNKT (1853 aa). N-linked (GlcNAc...) asparagine glycosylation is found at N107, N134, and N203. In terms of domain architecture, EGF-like spans 423–460; that stretch reads YGQNCDPTPPCDKGIPNEGILGDGKCMCINGYSGDKCD. Intrachain disulfides connect C433-C448 and C450-C459. Residues 514–699 enclose the VWFA domain; that stretch reads DVFVLVDVNV…AGLKSVLSNV (186 aa). 18 N-linked (GlcNAc...) asparagine glycosylation sites follow: N705, N860, N1043, N1113, N1177, N1374, N1401, N1513, N1611, N1620, N1662, N1671, N1737, N1743, N1762, N1812, N1852, and N1873. The chain crosses the membrane as a helical span at residues 1876–1896; the sequence is VLTGAIAGAAAGTALIAAAAW. Residues 1897–1946 are Cytoplasmic-facing; sequence KLLRKAAPPTDTFFSEAAFLGDGVNANPLYEQSASAAENPLYQSASDNTD.

This sequence belongs to the SIB family. Interacts with talA/talin.

The protein localises to the membrane. In terms of biological role, implicated in cellular adhesion. This chain is Integrin beta-like protein E (sibE), found in Dictyostelium discoideum (Social amoeba).